Here is a 167-residue protein sequence, read N- to C-terminus: Bacterial non-heme ferritin (167 aa).

In terms of domain architecture, Ferritin-like diiron spans 1–145 (MLSKDIIKLL…DILDKIELIG (145 aa)). 5 residues coordinate Fe cation: Glu17, Glu50, His53, Glu94, and Gln127.

It belongs to the ferritin family. Prokaryotic subfamily. As to quaternary structure, homooligomer of 24 subunits that assemble into a spherical protein shell (12 +/- 1 nM diameter) that can sequester at least 2000 iron atoms.

It localises to the cytoplasm. It carries out the reaction 4 Fe(2+) + O2 + 6 H2O = 4 iron(III) oxide-hydroxide + 12 H(+). Functionally, iron-storage protein. This chain is Bacterial non-heme ferritin (ftnA), found in Helicobacter pylori (strain ATCC 700392 / 26695) (Campylobacter pylori).